Here is a 491-residue protein sequence, read N- to C-terminus: Probable ribonuclease FAU-1 (491 aa).

This sequence belongs to the FAU-1 family.

Probable RNase involved in rRNA stability through maturation and/or degradation of precursor rRNAs. Binds to RNA in loop regions with AU-rich sequences. This chain is Probable ribonuclease FAU-1, found in Thermofilum pendens (strain DSM 2475 / Hrk 5).